A 217-amino-acid chain; its full sequence is Peroxiredoxin Q, chloroplastic (217 aa).

The N-terminal 65 residues, 1-65 (MAAICLPVAK…PPPSYSARIS (65 aa)), are a transit peptide targeting the chloroplast. The Thioredoxin domain occupies 70–217 (VSKGSVPPQF…DETLKFLQSA (148 aa)). Cys112 functions as the Cysteine sulfenic acid (-SOH) intermediate in the catalytic mechanism. A disulfide bond links Cys112 and Cys117.

It belongs to the peroxiredoxin family. BCP/PrxQ subfamily. In terms of assembly, monomer. Expressed in the leaves, roots and stems.

It localises to the plastid. Its subcellular location is the chloroplast thylakoid lumen. It catalyses the reaction a hydroperoxide + [thioredoxin]-dithiol = an alcohol + [thioredoxin]-disulfide + H2O. Thiol-specific peroxidase that catalyzes the reduction of hydrogen peroxide and organic hydroperoxides to water and alcohols, respectively. Plays a role in cell protection against oxidative stress by detoxifying peroxides. Involved in both resistance against fungal disease and oxidative stress. This Gentiana triflora (Clustered gentian) protein is Peroxiredoxin Q, chloroplastic (AFP1).